A 1079-amino-acid polypeptide reads, in one-letter code: Extracellular calcium-sensing receptor (1079 aa).

The first 19 residues, 1–19 (MAFSSCCWILLALTWCTSA), serve as a signal peptide directing secretion. Residues 20 to 610 (YGPDQRAQKK…KEIEFLSWTE (591 aa)) are Extracellular-facing. The ligand-binding 1 (LB1) stretch occupies residues 22-188 (PDQRAQKKGD…QFKSFLRTIP (167 aa)). An intrachain disulfide couples C60 to C101. Residue 66 to 70 (RGFRW) participates in phosphate binding. Residues I81, S84, L87, and L88 each coordinate Ca(2+). The N-linked (GlcNAc...) asparagine glycan is linked to N90. Residue T100 coordinates Ca(2+). N-linked (GlcNAc...) asparagine glycosylation occurs at N130. A Ca(2+)-binding site is contributed by T145. 3 residues coordinate L-tryptophan: S147, A168, and S170. S170, P188, D190, E231, and D234 together coordinate Ca(2+). The segment at 189 to 324 (NDEHQATAMA…GGTIGFALKA (136 aa)) is ligand-binding 2 (LB2). 7 disulfides stabilise this stretch: C236-C561, C358-C395, C437-C449, C542-C562, C546-C565, C568-C582, and C585-C598. Residues D238 and S240 each contribute to the spermine site. 2 N-linked (GlcNAc...) asparagine glycosylation sites follow: N261 and N287. E297 is a Ca(2+) binding site. Residue E297 participates in L-tryptophan binding. N-linked (GlcNAc...) asparagine glycosylation is found at N386 and N400. Phosphate is bound at residue 415-417 (RIS). N446, N468, and N488 each carry an N-linked (GlcNAc...) asparagine glycan. Residue Y489 coordinates Ca(2+). N-linked (GlcNAc...) asparagine glycosylation is present at N541. The segment at 542-612 (CSRDCLAGTR…IEFLSWTEPF (71 aa)) is cysteine-rich (CR). A Ca(2+)-binding site is contributed by G557. An N-linked (GlcNAc...) asparagine glycan is attached at N594. A helical transmembrane segment spans residues 611–636 (PFGIALTLFAVLGIFLTAFVLGVFIK). The Cytoplasmic segment spans residues 637 to 648 (FRNTPIVKATNR). The segment at 637-648 (FRNTPIVKATNR) is intracellular loop 1 (ICL1). Residues 649-668 (ELSYLLLFSLLCCFSSSLFF) traverse the membrane as a helical segment. Over 669–674 (IGEPQD) the chain is Extracellular. Residues 675–698 (WTCRLRQPAFGISFVLCISCILVK) traverse the membrane as a helical segment. The Cytoplasmic portion of the chain corresponds to 699–722 (TNRVLLVFEAKIPTSFHRKWWGLN). The tract at residues 699 to 722 (TNRVLLVFEAKIPTSFHRKWWGLN) is intracellular loop 2 (ICL2). The helical transmembrane segment at 723-745 (LQFLLVFLCTFMQIVICAIWLYT) threads the bilayer. Over 746 to 769 (APPSSYRNHELEDEIIFITCHEGS) the chain is Extracellular. A helical membrane pass occupies residues 770–789 (LMALGFLIGYTCLLAAICFF). The Cytoplasmic segment spans residues 790–805 (FAFKSRKLPENFNEAK). Residues 790-805 (FAFKSRKLPENFNEAK) are intracellular loop 3 (ICL3). Residues 806–828 (FITFSMLIFFIVWISFIPAYAST) traverse the membrane as a helical segment. At 829 to 832 (YGKF) the chain is on the extracellular side. A helical transmembrane segment spans residues 833-854 (VSAVEVIAILAASFGLLACIFF). Over 855–1079 (NKVYIILFKP…STVTENMLHS (225 aa)) the chain is Cytoplasmic. Residues 855–1079 (NKVYIILFKP…STVTENMLHS (225 aa)) form a C-terminus region. Positions 880–900 (AFKVAARATLRRSNVSRQRSS) are interaction with RNF19A. At T888 the chain carries Phosphothreonine. Positions 890 to 898 (RRSNVSRQR) are arginine-rich retention motif. Phosphoserine occurs at positions 892, 899, and 920. The segment covering 892 to 918 (SNVSRQRSSSLGGSTGSTPSSSISSKS) has biased composition (low complexity). A disordered region spans residues 892–963 (SNVSRQRSSS…QPQLQQQPRC (72 aa)). Positions 945–954 (PQAPSTPQPQ) are enriched in pro residues. Position 1062 is a phosphoserine (S1062).

This sequence belongs to the G-protein coupled receptor 3 family. As to quaternary structure, homodimer; disulfide-linked. Interacts with VCP. Interacts with ARRB1. Post-translationally, phosphorylation at Thr-888 by PKC impairs coupling with G(q)/G(11) G-proteins, while it does not affect G(i)/G(o)-coupling. Phosphorylation at Ser-892 by PKC and Ser-899 by PKA promote plasma membrane localization. Ubiquitinated by RNF19A; which induces proteasomal degradation.

The protein resides in the cell membrane. In resting state, adopts an open conformation, anion-binding promoting the inactive configuration. Upon aromatic amino acid-binding, the groove in the extracellular venus flytrap module is closed, thereby inducing the formation of a novel homodimer interface between subunits. Calcium ions stabilize the active state by enhancing homodimer interactions between membrane-proximal domains to fully activate the receptor. Upon activation, the homodimer adopts an asymmetric configuration of the 7-transmembrane region that primes one protomer for G-protein coupling. G-protein binding expands the transmembrane dimer interface; the restriction imposed by the receptor dimer, in combination with intracellular loop 2 (ICL2), enables G-protein activation by facilitating conformational transition of G-protein alpha. Coupling to different classes of G-proteins results in distinct CASR-G-protein interfaces. In contrast to human protein, not activated by AMG 416, a D-amino acid-containing peptide agonist: this is probably due to the absence of a Cys residue at position 482, which forms a disulfide bond with the AMG 416 peptide agonist in human and that is replaced by a Tyr residue in pig. In terms of biological role, G-protein-coupled receptor that senses changes in the extracellular concentration of calcium ions and plays a key role in maintaining calcium homeostasis. Senses fluctuations in the circulating calcium concentration: activated by elevated circulating calcium, leading to decreased parathyroid hormone (PTH) secretion in parathyroid glands. In kidneys, acts as a key regulator of renal tubular calcium resorption. Ligand binding causes a conformation change that triggers signaling via guanine nucleotide-binding proteins (G-proteins) and modulates the activity of downstream effectors. CASR is coupled with different G(q)/G(11), G(i)/G(o)- or G(s)-classes of G-proteins depending on the context. In the parathyroid and kidney, CASR signals through G(q)/G(11) and G(i)/G(o) G-proteins: G(q)/G(11) coupling activates phospholipase C-beta, releasing diacylglycerol (DAG) and inositol 1,4,5-trisphosphate (IP3) second messengers, while G(i)/G(o) coupling mediates inhibition of adenylate cyclase activity. The G-protein-coupled receptor activity is activated by a co-agonist mechanism: aromatic amino acids, such as Trp or Phe, act concertedly with divalent cations, such as calcium or magnesium, to achieve full receptor activation. Acts as an activator of the NLRP3 inflammasome via G(i)/G(o)-mediated signaling: down-regulation of cyclic AMP (cAMP) relieving NLRP3 inhibition by cAMP. Acts as a regulator of proton-sensing receptor GPR68 in a seesaw manner: CASR-mediated signaling inhibits GPR68 signaling in response to extracellular calcium, while GPR68 inhibits CASR in presence of extracellular protons. The sequence is that of Extracellular calcium-sensing receptor (CASR) from Sus scrofa (Pig).